A 77-amino-acid polypeptide reads, in one-letter code: Small ribosomal subunit protein bS18 (77 aa).

Belongs to the bacterial ribosomal protein bS18 family. As to quaternary structure, part of the 30S ribosomal subunit. Forms a tight heterodimer with protein bS6.

In terms of biological role, binds as a heterodimer with protein bS6 to the central domain of the 16S rRNA, where it helps stabilize the platform of the 30S subunit. The protein is Small ribosomal subunit protein bS18 of Desulforamulus reducens (strain ATCC BAA-1160 / DSM 100696 / MI-1) (Desulfotomaculum reducens).